A 2471-amino-acid chain; its full sequence is Probable polyketide synthase 24 (2471 aa).

The 429-residue stretch at 21–449 folds into the Ketosynthase family 3 (KS3) domain; it reads ENLVAIVGVG…GSNCCLVLSQ (429 aa). Residues Cys-190, His-332, and His-372 each act as for beta-ketoacyl synthase activity in the active site. The tract at residues 654 to 687 is acyl/malonyl transferase; that stretch reads GIKASFMLGHSLGEVTTAYCSGMIDIDQLCYLIY. Catalysis depends on Ser-664, which acts as the For acyl/malonyl transferase activity. Positions 953–1075 are N-terminal hotdog fold; it reads ISILGNSMQD…SNFHLNSNDN (123 aa). Positions 953 to 1245 constitute a PKS/mFAS DH domain; that stretch reads ISILGNSMQD…VKSLTPVKDP (293 aa). His-987 acts as the Proton acceptor; for dehydratase activity in catalysis. A C-terminal hotdog fold region spans residues 1094 to 1245; it reads NLSSIPWDEF…VKSLTPVKDP (152 aa). Asp-1157 (proton donor; for dehydratase activity) is an active-site residue. Positions 1426–1469 form a coiled coil; sequence IINEQQQQQQQQQQQQQQQQQQQQQLLNNENNKESLKNLLVNCN. In terms of domain architecture, Carrier spans 2336–2413; sequence SSSTNVKNKF…MVYQIINDSL (78 aa). Position 2373 is an O-(pantetheine 4'-phosphoryl)serine (Ser-2373).

Pantetheine 4'-phosphate is required as a cofactor.

Functionally, probable polyketide synthase. This Dictyostelium discoideum (Social amoeba) protein is Probable polyketide synthase 24 (pks24).